The following is a 288-amino-acid chain: Ankyrin repeat and SOCS box protein 8 (288 aa).

Serine 17 is subject to Phosphoserine. ANK repeat units lie at residues 52–81 (GTLKPLHCACMVSDADCVELLLEKGAEVNA), 85–113 (YNRTALHYAAERDEACVEVLLEYGANPNA), 117–146 (NRDTPLHWAAFKNNAECVRALLESGASVNA), and 150–179 (NNDTPLSWAAMKGNLESVSILLDYGAEVRV). The SOCS box domain occupies 235–288 (QLCEKLTVLCSAPGTLKTLARYAVRRSLGLQYLPDAVKGLPLPVSLKDYLLLLE).

Belongs to the ankyrin SOCS box (ASB) family. In terms of assembly, interacts with TBK1; this interaction promotes TBK1 proteasomal degradation. In terms of processing, phosphorylated by TBK1.

It is found in the cytoplasm. It functions in the pathway protein modification; protein ubiquitination. May be a substrate-recognition component of a SCF-like ECS (Elongin-Cullin-SOCS-box protein) E3 ubiquitin-protein ligase complex which mediates the ubiquitination and subsequent proteasomal degradation of target proteins. Inhibits IFN-beta production through the IRF3 signaling pathway by targeting TBK1 via 'Lys-48'-linked ubiquitination, leading to its proteasomal degradation. This Mus musculus (Mouse) protein is Ankyrin repeat and SOCS box protein 8 (Asb8).